Reading from the N-terminus, the 539-residue chain is Tyrosine-protein kinase csk-1 (539 aa).

The region spanning 43 to 110 is the SH3 domain; it reads SPGNDVIVTR…HADCVVRING (68 aa). Positions 129 to 148 are disordered; the sequence is PGAASTTSSTSSHHSTAANH. The span at 131–146 shows a compositional bias: low complexity; it reads AASTTSSTSSHHSTAA. The SH2 domain occupies 151 to 241; sequence WFHSMISREN…GLCHRLVTPI (91 aa). The Protein kinase domain occupies 283–535; sequence IDVGDTIGHG…GQVLQRLTTI (253 aa). Residues 289 to 297 and Lys-310 contribute to the ATP site; that span reads IGHGEFGDV. The active-site Proton acceptor is the Asp-403.

This sequence belongs to the protein kinase superfamily. Tyr protein kinase family. CSK subfamily. Mg(2+) is required as a cofactor. It depends on Mn(2+) as a cofactor. Expressed predominantly in pharyngeal muscles in procorpus, metacorpus and terminal bulb. Expressed also in some neurons (ASE, ADF, AVA, AUA, RMDV and BAG) in the head region, anchor cell, vulva, cells around anus, body wall muscle and gondal distal tip cells.

It carries out the reaction L-tyrosyl-[protein] + ATP = O-phospho-L-tyrosyl-[protein] + ADP + H(+). Non-receptor tyrosine-protein kinase which plays a role in pharynx function by regulating pumping and the orientation of pharyngeal muscle fibers, independently of src-1 and src-2. May phosphorylate and thereby negatively regulate src-1 and src-2 activities. The polypeptide is Tyrosine-protein kinase csk-1 (Caenorhabditis elegans).